Here is a 218-residue protein sequence, read N- to C-terminus: Probable chemoreceptor glutamine deamidase CheD (218 aa).

Belongs to the CheD family.

The catalysed reaction is L-glutaminyl-[protein] + H2O = L-glutamyl-[protein] + NH4(+). Probably deamidates glutamine residues to glutamate on methyl-accepting chemotaxis receptors (MCPs), playing an important role in chemotaxis. This Saccharophagus degradans (strain 2-40 / ATCC 43961 / DSM 17024) protein is Probable chemoreceptor glutamine deamidase CheD.